The primary structure comprises 239 residues: Sugar fermentation stimulation protein homolog (239 aa).

The protein belongs to the SfsA family.

The polypeptide is Sugar fermentation stimulation protein homolog (Mannheimia succiniciproducens (strain KCTC 0769BP / MBEL55E)).